A 387-amino-acid polypeptide reads, in one-letter code: Exodeoxyribonuclease 7 large subunit (387 aa).

Belongs to the XseA family. Heterooligomer composed of large and small subunits.

It localises to the cytoplasm. The catalysed reaction is Exonucleolytic cleavage in either 5'- to 3'- or 3'- to 5'-direction to yield nucleoside 5'-phosphates.. Its function is as follows. Bidirectionally degrades single-stranded DNA into large acid-insoluble oligonucleotides, which are then degraded further into small acid-soluble oligonucleotides. This Synechococcus sp. (strain CC9605) protein is Exodeoxyribonuclease 7 large subunit.